The sequence spans 715 residues: 1,4-alpha-glucan branching enzyme GlgB (715 aa).

The active-site Nucleophile is aspartate 396. Glutamate 449 acts as the Proton donor in catalysis.

It belongs to the glycosyl hydrolase 13 family. GlgB subfamily. In terms of assembly, monomer.

It catalyses the reaction Transfers a segment of a (1-&gt;4)-alpha-D-glucan chain to a primary hydroxy group in a similar glucan chain.. The protein operates within glycan biosynthesis; glycogen biosynthesis. Functionally, catalyzes the formation of the alpha-1,6-glucosidic linkages in glycogen by scission of a 1,4-alpha-linked oligosaccharide from growing alpha-1,4-glucan chains and the subsequent attachment of the oligosaccharide to the alpha-1,6 position. The protein is 1,4-alpha-glucan branching enzyme GlgB of Vibrio vulnificus (strain CMCP6).